The following is a 344-amino-acid chain: uncharacterized protein (344 aa).

Positions 38 and 167 each coordinate NADP(+).

It belongs to the NAD(P)-dependent epimerase/dehydratase family. Dihydroflavonol-4-reductase subfamily.

This is an uncharacterized protein from Saccharomyces cerevisiae (strain ATCC 204508 / S288c) (Baker's yeast).